A 645-amino-acid chain; its full sequence is Ethylene response sensor 2 (645 aa).

4 helical membrane-spanning segments follow: residues 5 to 25 (LLVQ…VTAA), 54 to 74 (VGDF…VYFV), 86 to 106 (VVCE…LAGF), and 125 to 145 (LTGI…PLLL). Positions 97 and 101 each coordinate Cu cation. Positions 190–346 (DRHTILYTTL…VVADQVAVAI (157 aa)) constitute a GAF domain. One can recognise a Histidine kinase domain in the interval 389-623 (MMSDAMRCPV…VFRFQLRRSM (235 aa)).

The protein belongs to the ethylene receptor family. In terms of assembly, heteromer with ETR1. Requires Cu cation as cofactor. Autophosphorylated predominantly on Ser residues. In terms of tissue distribution, expressed in etiolated seedlings, leaves, roots and stems. Highly expressed in flowers, stamens, pollen cells, tapetum cells, carpels and ovules.

The protein localises to the endoplasmic reticulum membrane. Ethylene receptor related to bacterial two-component regulators. Acts as a redundant negative regulator of ethylene signaling. The chain is Ethylene response sensor 2 (ERS2) from Arabidopsis thaliana (Mouse-ear cress).